Consider the following 793-residue polypeptide: Short transient receptor potential channel 1 (793 aa).

Residues 1-30 (MMAALYPSTDLSGASSSSLPSSPSSSSPNE) form a disordered region. The Cytoplasmic segment spans residues 1 to 345 (MMAALYPSTD…FGQMSGYRRK (345 aa)). The segment covering 15 to 28 (SSSSLPSSPSSSSP) has biased composition (low complexity). ANK repeat units lie at residues 46–75 (LNEK…SGDL), 83–109 (LGRN…YGCQ), 111–156 (ADAL…EYST), and 158–180 (MDVA…MLLK). H189, C193, C195, and C198 together coordinate Zn(2+). The segment at residues 346–379 (PTCKKIMTVLTVGIFWPVLSLCYLIAPKSQFGRI) is an intramembrane region (discontinuously helical). Residues 380–386 (IHTPFMK) lie on the Cytoplasmic side of the membrane. The chain crosses the membrane as a helical span at residues 387–404 (FIIHGASYFTFLLLLNLY). The Extracellular segment spans residues 405–422 (SLVYNEDKKNTMGPALER). The helical transmembrane segment at 423–439 (IDYLLILWIIGMIWSDI) threads the bilayer. Residues 440–455 (KRLWYEGLEDFLEESR) lie on the Cytoplasmic side of the membrane. The chain crosses the membrane as a helical span at residues 456–475 (NQLSFVMNSLYLATFALKVV). The Extracellular portion of the chain corresponds to 476–496 (AHNKFHDFADRKDWDAFHPTL). A helical transmembrane segment spans residues 497–517 (VAEGLFAFANVLSYLRLFFMY). Over 518 to 536 (TTSSILGPLQISMGQMLQD) the chain is Cytoplasmic. The helical transmembrane segment at 537–558 (FGKFLGMFLLVLFSFTIGLTQL) threads the bilayer. Over 559 to 623 (YDKGYTSKEQ…GEELQSFVGA (65 aa)) the chain is Extracellular. C571 and C576 are joined by a disulfide. A helical membrane pass occupies residues 624 to 644 (VIVGTYNVVVVIVLTKLLVAM). The Cytoplasmic portion of the chain corresponds to 645-793 (LHKSFQLIAN…SKYAMFYPRN (149 aa)).

It belongs to the transient receptor (TC 1.A.4) family. STrpC subfamily. TRPC1 sub-subfamily. In terms of assembly, heterotetramer with TRPC4 and/or TRPC5. Forms a heteromeric ion channel with TRPC4, with a 1:3 TRPC1:TRPC4 stoichiometry. Unlike other TRP channel proteins, does not form a homomeric channel. Interacts with TRPC4AP. Interacts with ITPR3. Interacts with MX1 and RNF24. Interacts with FKBP4. Interacts with PLSCR1. Interacts with PKD2L2. Forms a heterotetramer with PKD2 with a 2:2 stoichiometry; has distinct channel properties separate from PKD2 or TRPC1 homomers alone. Interacts with isoform 2 of TRPC3. In terms of processing, activation of PRKCA induces phosphorylation of TRPC1 and subsequent Ca2+ entry into cells. As to expression, seems to be ubiquitous.

The protein resides in the cell membrane. It catalyses the reaction Ca(2+)(in) = Ca(2+)(out). It carries out the reaction Na(+)(in) = Na(+)(out). The catalysed reaction is Li(+)(in) = Li(+)(out). The enzyme catalyses Cs(+)(in) = Cs(+)(out). Its activity is regulated as follows. May be operated by a phosphatidylinositol second messenger system activated by receptor tyrosine kinases or G-protein coupled receptors. Also activated by intracellular calcium store depletion. Inhibited by xanthine-based inhibitor Pico145. Functionally, forms a receptor-activated non-selective calcium permeant cation channel. Forms a heteromeric ion channel with TRPC4 or TRPC5 that has reduced calcium permeability compared to the homomeric TRPC4 or TRPC5 channel. Also permeable to monovalent ions including sodium, lithium and cesium ions. Its function is as follows. Forms a receptor-activated non-selective calcium permeant cation channel. Also activated by intracellular calcium store depletion. This Homo sapiens (Human) protein is Short transient receptor potential channel 1 (TRPC1).